Here is a 336-residue protein sequence, read N- to C-terminus: Tryptophan--tRNA ligase (336 aa).

ATP contacts are provided by residues 16–18 and 24–25; these read QPT and GN. Residues 17–25 carry the 'HIGH' region motif; the sequence is PTGQLHLGN. An L-tryptophan-binding site is contributed by Asp-140. Residues 152-154, Val-191, and 200-204 contribute to the ATP site; these read GED and KMSKS. A 'KMSKS' region motif is present at residues 200-204; it reads KMSKS.

This sequence belongs to the class-I aminoacyl-tRNA synthetase family. As to quaternary structure, homodimer.

The protein localises to the cytoplasm. It catalyses the reaction tRNA(Trp) + L-tryptophan + ATP = L-tryptophyl-tRNA(Trp) + AMP + diphosphate + H(+). Its function is as follows. Catalyzes the attachment of tryptophan to tRNA(Trp). This is Tryptophan--tRNA ligase from Gloeobacter violaceus (strain ATCC 29082 / PCC 7421).